The primary structure comprises 712 residues: Probable serine/threonine-protein kinase fhkE (712 aa).

The 55-residue stretch at Ile46–Val100 folds into the FHA domain. One can recognise a Protein kinase domain in the interval Tyr145–Phe411. Residues Leu151–Val159 and Lys174 each bind ATP. Asp270 acts as the Proton acceptor in catalysis. The stretch at Asn414–Thr442 forms a coiled coil. A disordered region spans residues Ala431–Arg695. Low complexity-rich tracts occupy residues Glu436–Asn446, Gly459–Asn481, Asn514–Thr571, Asn595–Ile605, and Asn616–Asn639. Polar residues predominate over residues Pro669 to Gly678.

Belongs to the protein kinase superfamily. CAMK Ser/Thr protein kinase family. CHK2 subfamily.

It carries out the reaction L-seryl-[protein] + ATP = O-phospho-L-seryl-[protein] + ADP + H(+). The catalysed reaction is L-threonyl-[protein] + ATP = O-phospho-L-threonyl-[protein] + ADP + H(+). This Dictyostelium discoideum (Social amoeba) protein is Probable serine/threonine-protein kinase fhkE (fhkE).